Here is a 215-residue protein sequence, read N- to C-terminus: Thiamine-phosphate synthase 1 (215 aa).

4-amino-2-methyl-5-(diphosphooxymethyl)pyrimidine is bound by residues Q35 to E39 and N67. Residues D68 and D87 each coordinate Mg(2+). Residue T106 participates in 4-amino-2-methyl-5-(diphosphooxymethyl)pyrimidine binding. A 2-[(2R,5Z)-2-carboxy-4-methylthiazol-5(2H)-ylidene]ethyl phosphate-binding site is contributed by T132–T134. K135 is a 4-amino-2-methyl-5-(diphosphooxymethyl)pyrimidine binding site. Residue G162 coordinates 2-[(2R,5Z)-2-carboxy-4-methylthiazol-5(2H)-ylidene]ethyl phosphate.

It belongs to the thiamine-phosphate synthase family. The cofactor is Mg(2+).

It catalyses the reaction 2-[(2R,5Z)-2-carboxy-4-methylthiazol-5(2H)-ylidene]ethyl phosphate + 4-amino-2-methyl-5-(diphosphooxymethyl)pyrimidine + 2 H(+) = thiamine phosphate + CO2 + diphosphate. The catalysed reaction is 2-(2-carboxy-4-methylthiazol-5-yl)ethyl phosphate + 4-amino-2-methyl-5-(diphosphooxymethyl)pyrimidine + 2 H(+) = thiamine phosphate + CO2 + diphosphate. The enzyme catalyses 4-methyl-5-(2-phosphooxyethyl)-thiazole + 4-amino-2-methyl-5-(diphosphooxymethyl)pyrimidine + H(+) = thiamine phosphate + diphosphate. Its pathway is cofactor biosynthesis; thiamine diphosphate biosynthesis; thiamine phosphate from 4-amino-2-methyl-5-diphosphomethylpyrimidine and 4-methyl-5-(2-phosphoethyl)-thiazole: step 1/1. Functionally, condenses 4-methyl-5-(beta-hydroxyethyl)thiazole monophosphate (THZ-P) and 2-methyl-4-amino-5-hydroxymethyl pyrimidine pyrophosphate (HMP-PP) to form thiamine monophosphate (TMP). The protein is Thiamine-phosphate synthase 1 of Aquifex aeolicus (strain VF5).